Consider the following 350-residue polypeptide: Induced myeloid leukemia cell differentiation protein Mcl-1 (350 aa).

Residues lysine 5 and lysine 40 each participate in a glycyl lysine isopeptide (Lys-Gly) (interchain with G-Cter in ubiquitin) cross-link. The interval 47–87 (EIGGGEAGAVIGGSAGASPPSTLTPDSRRVARPPPIGAEVP) is disordered. Gly residues predominate over residues 50-61 (GGEAGAVIGGSA). A PEST-like region spans residues 104–175 (RAAPLEEMEA…PAEEEEDELY (72 aa)). Serine 121 is modified (phosphoserine). Residue lysine 136 forms a Glycyl lysine isopeptide (Lys-Gly) (interchain with G-Cter in ubiquitin) linkage. The segment at 148-171 (GESGNNTSTDGSLPSTPPPAEEEE) is disordered. The segment covering 150–161 (SGNNTSTDGSLP) has biased composition (polar residues). Residue serine 159 is modified to Phosphoserine; by GSK3-alpha and GSK3-beta. Serine 162 carries the post-translational modification Phosphoserine. Residue threonine 163 is modified to Phosphothreonine; by MAPK. Glycyl lysine isopeptide (Lys-Gly) (interchain with G-Cter in ubiquitin) cross-links involve residues lysine 194 and lysine 197. The short motif at 209–223 (ALETLRRVGDGVQRN) is the BH3 element. Positions 252 to 272 (HVFSDGVTNWGRIVTLISFGA) match the BH1 motif. Residues 304–319 (DWLVKQRGWDGFVEFF) carry the BH2 motif. A helical membrane pass occupies residues 328 to 348 (IRNVLLAFAGVAGVGAGLAYL).

Belongs to the Bcl-2 family. Interacts with HIF3A (via C-terminus domain). Interacts with BAD, BOK, BIK and BMF. Interacts with PMAIP1. Interacts with BBC3. Isoform 1 interacts with BAX, BAK1 and TPT1. Heterodimer of isoform 1 and isoform 2. Homodimers of isoform 1 or isoform 2 are not detected. Isoform 2 does not interact with pro-apoptotic BCL2-related proteins. Interacts with RTL10/BOP. Interacts with BCL2L11; may sequester BCL2L11 to prevent its pro-apoptotic activity. Interacts with GIMAP5 and HSPA8/HSC70; the interaction between HSPA8 and MCL1 is impaired in the absence of GIMAP5. In terms of processing, cleaved by CASP3 during apoptosis. In intact cells cleavage occurs preferentially after Asp-127, yielding a pro-apoptotic 28 kDa C-terminal fragment. Rapidly degraded in the absence of phosphorylation on Thr-163 in the PEST region. Post-translationally, phosphorylated on Ser-159, by GSK3, in response to IL3/interleukin-3 withdrawal. Phosphorylation at Ser-159 induces ubiquitination and proteasomal degradation, abrogating the anti-apoptotic activity. Treatment with taxol or okadaic acid induces phosphorylation on additional sites. In terms of processing, ubiquitinated. Ubiquitination is induced by phosphorylation at Ser-159. Deubiquitinated by USP20; leading to increased stability.

It is found in the membrane. The protein resides in the cytoplasm. The protein localises to the mitochondrion. It localises to the nucleus. Its subcellular location is the nucleoplasm. Functionally, involved in the regulation of apoptosis versus cell survival, and in the maintenance of viability but not of proliferation. Mediates its effects by interactions with a number of other regulators of apoptosis. Isoform 1 inhibits apoptosis. Isoform 2 promotes apoptosis. The protein is Induced myeloid leukemia cell differentiation protein Mcl-1 (MCL1) of Homo sapiens (Human).